Reading from the N-terminus, the 585-residue chain is Arginine--tRNA ligase (585 aa).

The 'HIGH' region motif lies at 131–141 (ANPTGPMHVGH).

It belongs to the class-I aminoacyl-tRNA synthetase family. Monomer.

Its subcellular location is the cytoplasm. It catalyses the reaction tRNA(Arg) + L-arginine + ATP = L-arginyl-tRNA(Arg) + AMP + diphosphate. The polypeptide is Arginine--tRNA ligase (Brucella suis (strain ATCC 23445 / NCTC 10510)).